A 452-amino-acid chain; its full sequence is Pentatricopeptide repeat-containing protein At2g30780 (452 aa).

7 PPR repeats span residues 137-171, 173-207, 208-242, 243-273, 350-384, 385-419, and 420-452; these read TASV…THCA, TVVT…KLPP, NSVT…PVEP, DTDT…IKDQ, KSSI…GWKL, CRSL…NYGL, and VTKT…KRGL.

Belongs to the PPR family. P subfamily.

The protein is Pentatricopeptide repeat-containing protein At2g30780 of Arabidopsis thaliana (Mouse-ear cress).